A 622-amino-acid chain; its full sequence is C6 finger transcription factor fumR (622 aa).

The segment at residues 94–123 (CDRCHGQKLRCRRENNSDTCVRCARAGVRC) is a DNA-binding region (zn(2)-C6 fungal-type). Disordered stretches follow at residues 127–175 (PMRL…HSDH), 206–248 (ALTA…APNL), 299–360 (FDQA…SNSI), and 556–585 (PATG…DAGD). 3 stretches are compositionally biased toward polar residues: residues 148–167 (PANG…GPND), 217–226 (VHTSQPSGPQ), and 347–360 (RGNS…SNSI). Residues 556–571 (PATGSASKTAASGPPA) are compositionally biased toward low complexity.

Its subcellular location is the nucleus. In terms of biological role, transcription factor that regulates the expression of the gene clusters that mediate the biosynthesis of pseurotin and fumagillin. This Aspergillus fumigatus (strain ATCC MYA-4609 / CBS 101355 / FGSC A1100 / Af293) (Neosartorya fumigata) protein is C6 finger transcription factor fumR.